We begin with the raw amino-acid sequence, 98 residues long: Transcription elongation factor A protein-like 7 (98 aa).

Basic and acidic residues predominate over residues 1–22 (MQKSCNEKEGKPKGSEAKREDE). Positions 1 to 33 (MQKSCNEKEGKPKGSEAKREDEQPCGALEGQRL) are disordered. The stretch at 59-89 (GEEMTGEEEEMERCLEEIRSLRKKFRALHSN) forms a coiled coil.

Belongs to the TFS-II family. TFA subfamily.

The protein resides in the nucleus. Plays a role in the negative regulation of NF-kappa-B signaling at the basal level by modulating transcriptional activity of NF-kappa-B on its target gene promoters. Associates with cyclin D1 promoter containing Myc E-box sequence and transcriptionally represses cyclin D1 expression. Regulates telomerase reverse transcriptase expression and telomerase activity in both ALT (alternative lengthening of telomeres)and telomerase-positive cell lines. In Mus musculus (Mouse), this protein is Transcription elongation factor A protein-like 7 (Tceal7).